We begin with the raw amino-acid sequence, 282 residues long: Formamidopyrimidine-DNA glycosylase (282 aa).

The Schiff-base intermediate with DNA role is filled by Pro-2. Glu-3 functions as the Proton donor in the catalytic mechanism. The active-site Proton donor; for beta-elimination activity is the Lys-60. Residues His-99, Arg-118, and Lys-163 each contribute to the DNA site. The segment at 248-282 (LVYRRSGKNCKKCGEKILREKICGRSTHWCPNCQK) adopts an FPG-type zinc-finger fold. Residue Arg-272 is the Proton donor; for delta-elimination activity of the active site.

Belongs to the FPG family. As to quaternary structure, monomer. Requires Zn(2+) as cofactor.

It catalyses the reaction Hydrolysis of DNA containing ring-opened 7-methylguanine residues, releasing 2,6-diamino-4-hydroxy-5-(N-methyl)formamidopyrimidine.. The enzyme catalyses 2'-deoxyribonucleotide-(2'-deoxyribose 5'-phosphate)-2'-deoxyribonucleotide-DNA = a 3'-end 2'-deoxyribonucleotide-(2,3-dehydro-2,3-deoxyribose 5'-phosphate)-DNA + a 5'-end 5'-phospho-2'-deoxyribonucleoside-DNA + H(+). Functionally, involved in base excision repair of DNA damaged by oxidation or by mutagenic agents. Acts as a DNA glycosylase that recognizes and removes damaged bases. Has a preference for oxidized purines, such as 7,8-dihydro-8-oxoguanine (8-oxoG). Has AP (apurinic/apyrimidinic) lyase activity and introduces nicks in the DNA strand. Cleaves the DNA backbone by beta-delta elimination to generate a single-strand break at the site of the removed base with both 3'- and 5'-phosphates. This chain is Formamidopyrimidine-DNA glycosylase, found in Prochlorococcus marinus (strain NATL1A).